The primary structure comprises 417 residues: Serine hydroxymethyltransferase (417 aa).

(6S)-5,6,7,8-tetrahydrofolate is bound by residues L120 and 124-126 (GHL). N6-(pyridoxal phosphate)lysine is present on K229. 354-356 (SPF) serves as a coordination point for (6S)-5,6,7,8-tetrahydrofolate.

This sequence belongs to the SHMT family. Homodimer. It depends on pyridoxal 5'-phosphate as a cofactor.

The protein resides in the cytoplasm. The catalysed reaction is (6R)-5,10-methylene-5,6,7,8-tetrahydrofolate + glycine + H2O = (6S)-5,6,7,8-tetrahydrofolate + L-serine. It functions in the pathway one-carbon metabolism; tetrahydrofolate interconversion. Its pathway is amino-acid biosynthesis; glycine biosynthesis; glycine from L-serine: step 1/1. Its function is as follows. Catalyzes the reversible interconversion of serine and glycine with tetrahydrofolate (THF) serving as the one-carbon carrier. This reaction serves as the major source of one-carbon groups required for the biosynthesis of purines, thymidylate, methionine, and other important biomolecules. Also exhibits THF-independent aldolase activity toward beta-hydroxyamino acids, producing glycine and aldehydes, via a retro-aldol mechanism. This Acinetobacter baylyi (strain ATCC 33305 / BD413 / ADP1) protein is Serine hydroxymethyltransferase.